A 176-amino-acid chain; its full sequence is Ribosome rescue factor SmrB (176 aa).

Residues 97 to 172 (LDMHGMTQQE…GNGALLVLID (76 aa)) form the Smr domain.

The protein belongs to the SmrB family. As to quaternary structure, associates with collided ribosomes, but not with correctly translating polysomes.

In terms of biological role, acts as a ribosome collision sensor. Detects stalled/collided disomes (pairs of ribosomes where the leading ribosome is stalled and a second ribosome has collided with it) and endonucleolytically cleaves mRNA at the 5' boundary of the stalled ribosome. Stalled/collided disomes form a new interface (primarily via the 30S subunits) that binds SmrB. Cleaved mRNA becomes available for tmRNA ligation, leading to ribosomal subunit dissociation and rescue of stalled ribosomes. The sequence is that of Ribosome rescue factor SmrB from Photobacterium profundum (strain SS9).